Reading from the N-terminus, the 441-residue chain is Nuclear distribution protein nudF (441 aa).

The LisH domain occupies 9–41; it reads QAEELHKSIIAYLASVNLTESSAALRAELGDSV. WD repeat units lie at residues 87-128, 130-170, 174-221, 224-263, 266-326, 328-367, 372-402, and 403-440; these read GHRE…RTVK, HTKA…KNIR, GHDH…CVKT, GHVDWVRAVAPSLDGRFLFAAGDDRIPRLWDLSSAETKST, GHEH…IKTL, GHDNWVRALAFHPGGKHLLSVADDKTIRCWDLTQECKCVR, AHGHFVTCLRWAPPLIKDGGANGESETNGAP, and AATATTNGVRPDPNAANKISIRCVIATGSVDRKVRIFA. The interval 390 to 415 is disordered; the sequence is GGANGESETNGAPAATATTNGVRPDP. A compositionally biased stretch (low complexity) spans 398–410; sequence TNGAPAATATTNG.

It belongs to the WD repeat LIS1/nudF family. In terms of assembly, self-associates. Interacts with nudE and dynein.

The protein localises to the cytoplasm. Its subcellular location is the cytoskeleton. It localises to the spindle pole. In terms of biological role, positively regulates the activity of the minus-end directed microtubule motor protein dynein. May enhance dynein-mediated microtubule sliding by targeting dynein to the microtubule plus end. Required for nuclear migration during vegetative growth as well as development. Required for retrograde early endosome (EE) transport from the hyphal tip. Required for localization of dynein to the mitotic spindle poles. Recruits additional proteins to the dynein complex at SPBs. In Neosartorya fischeri (strain ATCC 1020 / DSM 3700 / CBS 544.65 / FGSC A1164 / JCM 1740 / NRRL 181 / WB 181) (Aspergillus fischerianus), this protein is Nuclear distribution protein nudF.